We begin with the raw amino-acid sequence, 106 residues long: Nucleoid-associated protein XOO1065 (106 aa).

Residues 80 to 89 (KIDAESKDRM) are compositionally biased toward basic and acidic residues. The tract at residues 80–106 (KIDAESKDRMGSATAGMQLPPGMKLPF) is disordered.

This sequence belongs to the YbaB/EbfC family. As to quaternary structure, homodimer.

Its subcellular location is the cytoplasm. The protein resides in the nucleoid. Binds to DNA and alters its conformation. May be involved in regulation of gene expression, nucleoid organization and DNA protection. The protein is Nucleoid-associated protein XOO1065 of Xanthomonas oryzae pv. oryzae (strain KACC10331 / KXO85).